Here is a 212-residue protein sequence, read N- to C-terminus: Phosphatidylserine decarboxylase proenzyme (212 aa).

The active-site Schiff-base intermediate with substrate; via pyruvic acid is Ser182. Ser182 is modified (pyruvic acid (Ser); by autocatalysis).

This sequence belongs to the phosphatidylserine decarboxylase family. PSD-A subfamily. Heterodimer of a large membrane-associated beta subunit and a small pyruvoyl-containing alpha subunit. Pyruvate serves as cofactor. Post-translationally, is synthesized initially as an inactive proenzyme. Formation of the active enzyme involves a self-maturation process in which the active site pyruvoyl group is generated from an internal serine residue via an autocatalytic post-translational modification. Two non-identical subunits are generated from the proenzyme in this reaction, and the pyruvate is formed at the N-terminus of the alpha chain, which is derived from the carboxyl end of the proenzyme. The post-translation cleavage follows an unusual pathway, termed non-hydrolytic serinolysis, in which the side chain hydroxyl group of the serine supplies its oxygen atom to form the C-terminus of the beta chain, while the remainder of the serine residue undergoes an oxidative deamination to produce ammonia and the pyruvoyl prosthetic group on the alpha chain.

It is found in the cell membrane. It carries out the reaction a 1,2-diacyl-sn-glycero-3-phospho-L-serine + H(+) = a 1,2-diacyl-sn-glycero-3-phosphoethanolamine + CO2. The protein operates within phospholipid metabolism; phosphatidylethanolamine biosynthesis; phosphatidylethanolamine from CDP-diacylglycerol: step 2/2. In terms of biological role, catalyzes the formation of phosphatidylethanolamine (PtdEtn) from phosphatidylserine (PtdSer). The chain is Phosphatidylserine decarboxylase proenzyme from Paraburkholderia xenovorans (strain LB400).